The chain runs to 211 residues: Holliday junction branch migration complex subunit RuvA (211 aa).

Positions 1-64 are domain I; the sequence is MIGRLRGMLV…EDAQLLYGFA (64 aa). The interval 65–143 is domain II; sequence NKVERKLFRL…DWQAQQIHLV (79 aa). The tract at residues 144–162 is flexible linker; sequence SDDGVIPEQLSAELSQETT. The domain III stretch occupies residues 163–211; the sequence is FVNDNKGDAINALLSLGYKQVQADKAVKSVYNRGMSSENIIRDALKSMI.

Belongs to the RuvA family. As to quaternary structure, homotetramer. Forms an RuvA(8)-RuvB(12)-Holliday junction (HJ) complex. HJ DNA is sandwiched between 2 RuvA tetramers; dsDNA enters through RuvA and exits via RuvB. An RuvB hexamer assembles on each DNA strand where it exits the tetramer. Each RuvB hexamer is contacted by two RuvA subunits (via domain III) on 2 adjacent RuvB subunits; this complex drives branch migration. In the full resolvosome a probable DNA-RuvA(4)-RuvB(12)-RuvC(2) complex forms which resolves the HJ.

Its subcellular location is the cytoplasm. In terms of biological role, the RuvA-RuvB-RuvC complex processes Holliday junction (HJ) DNA during genetic recombination and DNA repair, while the RuvA-RuvB complex plays an important role in the rescue of blocked DNA replication forks via replication fork reversal (RFR). RuvA specifically binds to HJ cruciform DNA, conferring on it an open structure. The RuvB hexamer acts as an ATP-dependent pump, pulling dsDNA into and through the RuvAB complex. HJ branch migration allows RuvC to scan DNA until it finds its consensus sequence, where it cleaves and resolves the cruciform DNA. The protein is Holliday junction branch migration complex subunit RuvA of Colwellia psychrerythraea (strain 34H / ATCC BAA-681) (Vibrio psychroerythus).